We begin with the raw amino-acid sequence, 320 residues long: Serpentine receptor class delta-28 (320 aa).

7 consecutive transmembrane segments (helical) span residues 5–25, 38–58, 83–103, 122–142, 176–196, 230–250, and 258–278; these read LLHT…MYLA, AIIT…FFVM, ACYI…IWMI, SLVF…ATWI, LTLI…YAWI, FLPS…TQLI, and LVSV…ILFV.

The protein belongs to the nematode receptor-like protein srd family.

It localises to the membrane. This Caenorhabditis elegans protein is Serpentine receptor class delta-28 (srd-28).